Here is a 308-residue protein sequence, read N- to C-terminus: Probable 5-dehydro-4-deoxyglucarate dehydratase (308 aa).

It belongs to the DapA family.

It catalyses the reaction 5-dehydro-4-deoxy-D-glucarate + H(+) = 2,5-dioxopentanoate + CO2 + H2O. Its pathway is carbohydrate acid metabolism; D-glucarate degradation; 2,5-dioxopentanoate from D-glucarate: step 2/2. The polypeptide is Probable 5-dehydro-4-deoxyglucarate dehydratase (ycbC) (Bacillus subtilis (strain 168)).